A 329-amino-acid polypeptide reads, in one-letter code: MSGLNSIGLGLVGDIGGTNARFALVDFDGADPQLIEPTSYKGEDYGTAEDAIEHYLAKMGLKHPDQAVVAVAGPIEHGAVHFTNSDWKLSEDSLRRAGGFRTARLINDFTAQALAAPRLAPKDLRQIGPLQTSGEGDLAILGPGTGFGAAGMVRRHGVETPLTTEGGHIAFAPFDDTEIEILRVLIKRFGRCSIERLLSGPGMEDLHVILGEIEGRKVDELTAKQITEHAVAGDDCCKVTIERFCAILGSAAGDLALALGARGGVFIAGGIAPRIVDLLEEGEFRARFEAKGRLSDYTRAIPTHVVMNPHTALIGAAVAMTPDGRAAIS.

ATP is bound at residue 13 to 18 (GDIGGT).

Belongs to the bacterial glucokinase family.

The protein localises to the cytoplasm. The enzyme catalyses D-glucose + ATP = D-glucose 6-phosphate + ADP + H(+). This is Glucokinase from Caulobacter sp. (strain K31).